The chain runs to 556 residues: tRNA (guanine(37)-N(1))-methyltransferase (556 aa).

The N-terminal 30 residues, 1–30 (MIITTKALTVLPHSGLRTTHRSLLARLRHY), are a transit peptide targeting the mitochondrion. S-adenosyl-L-methionine-binding positions include His-249, 287-288 (DL), 315-316 (DA), and Asn-346. Disordered regions lie at residues 444–465 (QHEE…KMKD) and 524–556 (KKAA…EMQM). 2 stretches are compositionally biased toward basic and acidic residues: residues 454-465 (EEAKRPSNKMKD) and 540-549 (SKPDTKKIEA).

It belongs to the class I-like SAM-binding methyltransferase superfamily. TRM5/TYW2 family. Monomer.

The protein resides in the mitochondrion matrix. It is found in the nucleus. It localises to the cytoplasm. The enzyme catalyses guanosine(37) in tRNA + S-adenosyl-L-methionine = N(1)-methylguanosine(37) in tRNA + S-adenosyl-L-homocysteine + H(+). Specifically methylates the N1 position of guanosine-37 in various cytoplasmic and mitochondrial tRNAs. Methylation is not dependent on the nature of the nucleoside 5' of the target nucleoside. This is the first step in the biosynthesis of wybutosine (yW), a modified base adjacent to the anticodon of tRNAs and required for accurate decoding. The sequence is that of tRNA (guanine(37)-N(1))-methyltransferase from Anopheles gambiae (African malaria mosquito).